Here is a 518-residue protein sequence, read N- to C-terminus: Sensor protein kinase HptS (518 aa).

2 helical membrane-spanning segments follow: residues 20-40 and 222-242; these read IFPV…IYIW and GITL…FGFI. Residues 297–513 form the Histidine kinase domain; that stretch reads EQLIHSIEHT…LICYKIPLSR (217 aa). A Phosphohistidine; by autocatalysis modification is found at H325.

Autophosphorylated.

Its subcellular location is the cell membrane. The catalysed reaction is ATP + protein L-histidine = ADP + protein N-phospho-L-histidine.. In terms of biological role, member of the two-component regulatory system HptS/HptR that regulates genes involved in hexose phosphate transport system in response to changes in extracellular phosphate sources. May act as a sensor protein kinase which is autophosphorylated at a histidine residue and transfers its phosphate group to the conserved aspartic acid residue in the regulatory domain of HptS. In turn, HptS antagonizes CcpA-dependent transcription of a subset of CcpA-regulated genes involved in antibiotic susceptibility. The protein is Sensor protein kinase HptS (hptS) of Staphylococcus aureus (strain USA300).